The sequence spans 564 residues: 2-succinyl-5-enolpyruvyl-6-hydroxy-3-cyclohexene-1-carboxylate synthase (564 aa).

It belongs to the TPP enzyme family. MenD subfamily. Homodimer. Mg(2+) serves as cofactor. Mn(2+) is required as a cofactor. Requires thiamine diphosphate as cofactor.

The enzyme catalyses isochorismate + 2-oxoglutarate + H(+) = 5-enolpyruvoyl-6-hydroxy-2-succinyl-cyclohex-3-ene-1-carboxylate + CO2. It participates in quinol/quinone metabolism; 1,4-dihydroxy-2-naphthoate biosynthesis; 1,4-dihydroxy-2-naphthoate from chorismate: step 2/7. It functions in the pathway quinol/quinone metabolism; menaquinone biosynthesis. Catalyzes the thiamine diphosphate-dependent decarboxylation of 2-oxoglutarate and the subsequent addition of the resulting succinic semialdehyde-thiamine pyrophosphate anion to isochorismate to yield 2-succinyl-5-enolpyruvyl-6-hydroxy-3-cyclohexene-1-carboxylate (SEPHCHC). This chain is 2-succinyl-5-enolpyruvyl-6-hydroxy-3-cyclohexene-1-carboxylate synthase, found in Vibrio vulnificus (strain YJ016).